The following is a 346-amino-acid chain: Methionine import ATP-binding protein MetN 1 (346 aa).

The ABC transporter domain maps to 2–241; that stretch reads IEFKQVTKTF…PQHPTTEKFV (240 aa). 38–45 provides a ligand contact to ATP; that stretch reads GFSGAGKS.

It belongs to the ABC transporter superfamily. Methionine importer (TC 3.A.1.24) family. The complex is composed of two ATP-binding proteins (MetN), two transmembrane proteins (MetI) and a solute-binding protein (MetQ).

The protein localises to the cell membrane. The catalysed reaction is L-methionine(out) + ATP + H2O = L-methionine(in) + ADP + phosphate + H(+). It carries out the reaction D-methionine(out) + ATP + H2O = D-methionine(in) + ADP + phosphate + H(+). Its function is as follows. Part of the ABC transporter complex MetNIQ involved in methionine import. Responsible for energy coupling to the transport system. The protein is Methionine import ATP-binding protein MetN 1 of Shouchella clausii (strain KSM-K16) (Alkalihalobacillus clausii).